A 508-amino-acid polypeptide reads, in one-letter code: tRNA-2-methylthio-N(6)-dimethylallyladenosine synthase (508 aa).

Residues 1–21 (MNEEQRKASGQVSSSDKKSEK) are disordered. The MTTase N-terminal domain occupies 65–183 (RKFYIRTYGC…LPELLSECYL (119 aa)). [4Fe-4S] cluster is bound by residues Cys-74, Cys-110, Cys-144, Cys-220, Cys-224, and Cys-227. Positions 206-436 (RQGKIKGWVN…NALVNEISAK (231 aa)) constitute a Radical SAM core domain. The TRAM domain maps to 439–502 (KEYEGQTVEV…TWSLDGEMVG (64 aa)).

This sequence belongs to the methylthiotransferase family. MiaB subfamily. Monomer. It depends on [4Fe-4S] cluster as a cofactor.

It is found in the cytoplasm. It catalyses the reaction N(6)-dimethylallyladenosine(37) in tRNA + (sulfur carrier)-SH + AH2 + 2 S-adenosyl-L-methionine = 2-methylsulfanyl-N(6)-dimethylallyladenosine(37) in tRNA + (sulfur carrier)-H + 5'-deoxyadenosine + L-methionine + A + S-adenosyl-L-homocysteine + 2 H(+). Functionally, catalyzes the methylthiolation of N6-(dimethylallyl)adenosine (i(6)A), leading to the formation of 2-methylthio-N6-(dimethylallyl)adenosine (ms(2)i(6)A) at position 37 in tRNAs that read codons beginning with uridine. This is tRNA-2-methylthio-N(6)-dimethylallyladenosine synthase from Bacillus pumilus (strain SAFR-032).